A 69-amino-acid polypeptide reads, in one-letter code: Light-harvesting polypeptide B-800/860 alpha chain (69 aa).

At 1 to 14 the chain is on the cytoplasmic side; the sequence is MTNGKIWLVVKPTV. The chain crosses the membrane as a helical span at residues 15 to 35; the sequence is GLPIGMLFAALLAVLIHGLLF. Histidine 31 is an a bacteriochlorophyll binding site. Over 36–69 the chain is Periplasmic; it reads VDGRLKSWWSEFPVAKPAVVSVQAAPAPVAAEVK.

Belongs to the antenna complex alpha subunit family. The core complex is formed by different alpha and beta chains, binding bacteriochlorophyll molecules, and arranged most probably in tetrameric structures disposed around the reaction center. The non-pigmented gamma chains may constitute additional components.

The protein localises to the cell inner membrane. Antenna complexes are light-harvesting systems, which transfer the excitation energy to the reaction centers. This Rhodocyclus tenuis (Rhodospirillum tenue) protein is Light-harvesting polypeptide B-800/860 alpha chain.